We begin with the raw amino-acid sequence, 338 residues long: 5-dehydro-2-deoxygluconokinase (338 aa).

This sequence belongs to the carbohydrate kinase PfkB family.

The enzyme catalyses 5-dehydro-2-deoxy-D-gluconate + ATP = 6-phospho-5-dehydro-2-deoxy-D-gluconate + ADP + H(+). It participates in polyol metabolism; myo-inositol degradation into acetyl-CoA; acetyl-CoA from myo-inositol: step 5/7. Catalyzes the phosphorylation of 5-dehydro-2-deoxy-D-gluconate (2-deoxy-5-keto-D-gluconate or DKG) to 6-phospho-5-dehydro-2-deoxy-D-gluconate (DKGP). The chain is 5-dehydro-2-deoxygluconokinase from Mesomycoplasma hyopneumoniae (strain J / ATCC 25934 / NCTC 10110) (Mycoplasma hyopneumoniae).